Consider the following 582-residue polypeptide: WD repeat-containing protein JIP5 (582 aa).

5 WD repeats span residues 27-68 (KYPE…EAQS), 125-168 (RHKG…VLSK), 177-216 (DKND…SNQL), 265-310 (DQED…LMDQ), and 373-410 (GPAD…LNSD). Disordered stretches follow at residues 405–496 (ETLN…DTEL) and 531–582 (TKEQ…FDDL). 2 stretches are compositionally biased toward acidic residues: residues 410 to 438 (DSDD…DDDV) and 447 to 485 (EVND…ENVT). 2 stretches are compositionally biased toward basic and acidic residues: residues 531–540 (TKEQSTKKAD) and 570–582 (QKHE…FDDL).

Belongs to the WD repeat WDR55 family.

It localises to the nucleus. The protein resides in the nucleolus. This chain is WD repeat-containing protein JIP5 (JIP5), found in Debaryomyces hansenii (strain ATCC 36239 / CBS 767 / BCRC 21394 / JCM 1990 / NBRC 0083 / IGC 2968) (Yeast).